Consider the following 498-residue polypeptide: tRNA-2-methylthio-N(6)-dimethylallyladenosine synthase (498 aa).

The MTTase N-terminal domain occupies 2–118 (PRYSITTFGC…LPGLLGDLAI (117 aa)). Cysteine 11, cysteine 47, cysteine 81, cysteine 163, cysteine 167, and cysteine 170 together coordinate [4Fe-4S] cluster. The 245-residue stretch at 149–393 (PRAAPTAFVT…FEESEALLAA (245 aa)) folds into the Radical SAM core domain. The region spanning 396–467 (SALVGTTQEV…KHSLQAELTE (72 aa)) is the TRAM domain. Residues 469–498 (ARAAARPRQRGGLEPRPARRSLPVVAAEGG) form a disordered region.

Belongs to the methylthiotransferase family. MiaB subfamily. Monomer. It depends on [4Fe-4S] cluster as a cofactor.

Its subcellular location is the cytoplasm. It catalyses the reaction N(6)-dimethylallyladenosine(37) in tRNA + (sulfur carrier)-SH + AH2 + 2 S-adenosyl-L-methionine = 2-methylsulfanyl-N(6)-dimethylallyladenosine(37) in tRNA + (sulfur carrier)-H + 5'-deoxyadenosine + L-methionine + A + S-adenosyl-L-homocysteine + 2 H(+). Its function is as follows. Catalyzes the methylthiolation of N6-(dimethylallyl)adenosine (i(6)A), leading to the formation of 2-methylthio-N6-(dimethylallyl)adenosine (ms(2)i(6)A) at position 37 in tRNAs that read codons beginning with uridine. This is tRNA-2-methylthio-N(6)-dimethylallyladenosine synthase from Sorangium cellulosum (strain So ce56) (Polyangium cellulosum (strain So ce56)).